We begin with the raw amino-acid sequence, 307 residues long: MSENQQALNHVVSMEDLTVDQVMKLIKRGIEFKNGAQIPYEDHPIVSNLFFEDSTRTHKSFEVAEIKLGLERLDFDVKTSSVNKGETLYDTILTLSALGVDVCVIRHPEVDYYRELIASPTITTSIINGGDGSGQHPSQSLLDLMTIYEEFGHFEGLKVAIAGDLDHSRVAKSNMQILKRLGSELFFAGPEEWRSQEFADYGKFVTIDEIIDQVDVMMFLRVQHERHDSGAVFSKEDYHAQHGLTQERYDRLKETAILMHPAPINRDVEIADHLVEAPKSRIVQQMTNGVFVRMAILESVLASRNAN.

2 residues coordinate carbamoyl phosphate: Arg56 and Thr57. Residue Lys84 participates in L-aspartate binding. 3 residues coordinate carbamoyl phosphate: Arg106, His136, and Gln139. 2 residues coordinate L-aspartate: Arg169 and Arg221. Carbamoyl phosphate contacts are provided by Ala262 and Pro263.

This sequence belongs to the aspartate/ornithine carbamoyltransferase superfamily. ATCase family. In terms of assembly, heterododecamer (2C3:3R2) of six catalytic PyrB chains organized as two trimers (C3), and six regulatory PyrI chains organized as three dimers (R2).

The enzyme catalyses carbamoyl phosphate + L-aspartate = N-carbamoyl-L-aspartate + phosphate + H(+). The protein operates within pyrimidine metabolism; UMP biosynthesis via de novo pathway; (S)-dihydroorotate from bicarbonate: step 2/3. Catalyzes the condensation of carbamoyl phosphate and aspartate to form carbamoyl aspartate and inorganic phosphate, the committed step in the de novo pyrimidine nucleotide biosynthesis pathway. This Streptococcus pneumoniae serotype 2 (strain D39 / NCTC 7466) protein is Aspartate carbamoyltransferase catalytic subunit.